We begin with the raw amino-acid sequence, 76 residues long: uncharacterized protein (76 aa).

This is an uncharacterized protein from Bacillus subtilis (strain 168).